Here is a 248-residue protein sequence, read N- to C-terminus: tRNA pseudouridine synthase A (248 aa).

The Nucleophile role is filled by Asp-53. Tyr-111 serves as a coordination point for substrate.

This sequence belongs to the tRNA pseudouridine synthase TruA family. In terms of assembly, homodimer.

It carries out the reaction uridine(38/39/40) in tRNA = pseudouridine(38/39/40) in tRNA. In terms of biological role, formation of pseudouridine at positions 38, 39 and 40 in the anticodon stem and loop of transfer RNAs. The protein is tRNA pseudouridine synthase A of Listeria innocua serovar 6a (strain ATCC BAA-680 / CLIP 11262).